The primary structure comprises 80 residues: Putative membrane protein insertion efficiency factor (80 aa).

It belongs to the UPF0161 family.

Its subcellular location is the cell inner membrane. Could be involved in insertion of integral membrane proteins into the membrane. The chain is Putative membrane protein insertion efficiency factor from Paracoccus denitrificans (strain Pd 1222).